The primary structure comprises 2241 residues: Large tegument protein deneddylase (2241 aa).

Residues 1–238 are deubiquitination activity; sequence MKVTQASCHQ…IDLTGVVRES (238 aa). The Peptidase C76 domain occupies 4–226; sequence TQASCHQGDI…AARLVSTYRD (223 aa). Residues Cys-24, Asp-160, and His-162 contribute to the active site. The segment at 239-314 is disordered; sequence ADTAATTTTA…STTSKTLATA (76 aa). A compositionally biased stretch (low complexity) spans 240–250; sequence DTAATTTTAAP. A compositionally biased stretch (pro residues) spans 251 to 268; it reads SLPPLPDPIVDPGCPPGV. The segment covering 304-314 has biased composition (low complexity); that stretch reads PSTTSKTLATA. Positions 327–331 are interaction with inner tegument protein; the sequence is SSAVP. Disordered stretches follow at residues 1187–1230 and 2118–2152; these read MTET…PPAD and PIAR…DTSR. Basic and acidic residues-rich tracts occupy residues 1190-1199 and 2142-2152; these read TSERLDRSLR and QIDHAQDDTSR.

It belongs to the herpesviridae large tegument protein family. Interacts with host CUL1 and CUL4A; these interactions inhibit the E3 ligase activity of cullins. Interacts with inner tegument protein. Interacts with capsid vertex specific component CVC2. Interacts with the major capsid protein/MCP.

The protein resides in the virion tegument. Its subcellular location is the host cytoplasm. It localises to the host nucleus. The catalysed reaction is Thiol-dependent hydrolysis of ester, thioester, amide, peptide and isopeptide bonds formed by the C-terminal Gly of ubiquitin (a 76-residue protein attached to proteins as an intracellular targeting signal).. Large tegument protein that plays multiple roles in the viral cycle. During viral entry, remains associated with the capsid while most of the tegument is detached and participates in the capsid transport toward the host nucleus. Plays a role in the routing of the capsid at the nuclear pore complex and subsequent uncoating. Within the host nucleus, acts as a deneddylase and promotes the degradation of nuclear CRLs (cullin-RING ubiquitin ligases) and thereby stabilizes nuclear CRL substrates, while cytoplasmic CRLs remain unaffected. These modifications prevent host cell cycle S-phase progression and create a favorable environment allowing efficient viral genome replication. Participates later in the secondary envelopment of capsids. Indeed, plays a linker role for the association of the outer viral tegument to the capsids together with the inner tegument protein. This is Large tegument protein deneddylase (UL48) from Homo sapiens (Human).